Reading from the N-terminus, the 158-residue chain is MIRIGHGFDVHAFGQDRPLMICGVEVPYHTGFIAHSDGDVALHALTDALLGAVALGDIGKLFPDTDMQYKNADSRKLLIEAYRQVRAQGYKVANVDVTIIAQAPKMRPYIDQMRQTIADDLQCDAMQVNVKATTTEKLGFTGRGEGIACEAVALLIKQ.

A divalent metal cation-binding residues include aspartate 9 and histidine 11. Residues aspartate 9–histidine 11 and histidine 35–serine 36 each bind 4-CDP-2-C-methyl-D-erythritol 2-phosphate. A divalent metal cation is bound at residue histidine 43. Residues aspartate 57–glycine 59, phenylalanine 62–aspartate 66, threonine 133–glutamate 136, phenylalanine 140, and arginine 143 each bind 4-CDP-2-C-methyl-D-erythritol 2-phosphate.

The protein belongs to the IspF family. In terms of assembly, homotrimer. A divalent metal cation serves as cofactor.

The catalysed reaction is 4-CDP-2-C-methyl-D-erythritol 2-phosphate = 2-C-methyl-D-erythritol 2,4-cyclic diphosphate + CMP. It participates in isoprenoid biosynthesis; isopentenyl diphosphate biosynthesis via DXP pathway; isopentenyl diphosphate from 1-deoxy-D-xylulose 5-phosphate: step 4/6. Its function is as follows. Involved in the biosynthesis of isopentenyl diphosphate (IPP) and dimethylallyl diphosphate (DMAPP), two major building blocks of isoprenoid compounds. Catalyzes the conversion of 4-diphosphocytidyl-2-C-methyl-D-erythritol 2-phosphate (CDP-ME2P) to 2-C-methyl-D-erythritol 2,4-cyclodiphosphate (ME-CPP) with a corresponding release of cytidine 5-monophosphate (CMP). This Actinobacillus pleuropneumoniae serotype 5b (strain L20) protein is 2-C-methyl-D-erythritol 2,4-cyclodiphosphate synthase.